Reading from the N-terminus, the 365-residue chain is 3-dehydroquinate synthase (365 aa).

Residues 106-110 (GVIGD), 130-131 (TT), K142, K151, and 169-172 (FFAT) contribute to the NAD(+) site. 3 residues coordinate Zn(2+): E184, H247, and H264.

Belongs to the sugar phosphate cyclases superfamily. Dehydroquinate synthase family. It depends on Co(2+) as a cofactor. Zn(2+) serves as cofactor. NAD(+) is required as a cofactor.

The protein resides in the cytoplasm. The catalysed reaction is 7-phospho-2-dehydro-3-deoxy-D-arabino-heptonate = 3-dehydroquinate + phosphate. It functions in the pathway metabolic intermediate biosynthesis; chorismate biosynthesis; chorismate from D-erythrose 4-phosphate and phosphoenolpyruvate: step 2/7. Catalyzes the conversion of 3-deoxy-D-arabino-heptulosonate 7-phosphate (DAHP) to dehydroquinate (DHQ). The protein is 3-dehydroquinate synthase of Listeria monocytogenes serotype 4b (strain CLIP80459).